The primary structure comprises 319 residues: Taste receptor type 2 member 30 (319 aa).

M1 is a topological domain (extracellular). A helical membrane pass occupies residues 2 to 22 (ITFLPIIFSILIVVIFVIGNF). The Cytoplasmic segment spans residues 23–46 (ANGFIALVNSIEWVKRQKISFVDQ). The helical transmembrane segment at 47 to 67 (ILTALAVSRVGLLWVLLLHWY) threads the bilayer. The Extracellular portion of the chain corresponds to 68-86 (ATQLNPAFYSVEVRITVYN). Residues 87 to 107 (VWAVTNHFSSWLATSLSMFYL) form a helical membrane-spanning segment. At 108-126 (LKIANFSNLIFLRIKRRVK) the chain is on the cytoplasmic side. A helical membrane pass occupies residues 127–147 (SVVLVILLGPLLFLVCHLFVI). At 148 to 178 (NMDETIWTKEYEGNMTWKIKLRSAMYHSNMT) the chain is on the extracellular side. Residues N161 and N176 are each glycosylated (N-linked (GlcNAc...) asparagine). A helical transmembrane segment spans residues 179–199 (LTMLANFVPLTLTLISFLLLI). Residues 200 to 229 (CSLCKHLKKMQLHGKGSQDPSTKVHIKALQ) are Cytoplasmic-facing. A helical transmembrane segment spans residues 230 to 250 (TVTSFLLLCAIYFLSMIISVC). Residues 251–259 (NLGRLEKQP) are Extracellular-facing. Residues 260–280 (VFMFCQAIIFSYPSTHPFILI) traverse the membrane as a helical segment. Residues 281-319 (LGNKKLKQIFLSVLWHVRYWVKDRSLRLHRFTRAALCKG) lie on the Cytoplasmic side of the membrane.

It belongs to the G-protein coupled receptor T2R family.

It is found in the membrane. Functionally, receptor that may play a role in the perception of bitterness and is gustducin-linked. May play a role in sensing the chemical composition of the gastrointestinal content. The activity of this receptor may stimulate alpha gustducin, mediate PLC-beta-2 activation and lead to the gating of TRPM5. This Pan troglodytes (Chimpanzee) protein is Taste receptor type 2 member 30 (TAS2R30).